Here is a 428-residue protein sequence, read N- to C-terminus: UDP-N-acetylglucosamine 1-carboxyvinyltransferase 2 (428 aa).

22 to 23 (KN) contacts phosphoenolpyruvate. Position 92 (arginine 92) interacts with UDP-N-acetyl-alpha-D-glucosamine. Residue cysteine 116 is the Proton donor of the active site. Residue cysteine 116 is modified to 2-(S-cysteinyl)pyruvic acid O-phosphothioketal. UDP-N-acetyl-alpha-D-glucosamine-binding positions include 121-125 (RPIDQ), aspartate 304, and isoleucine 326.

The protein belongs to the EPSP synthase family. MurA subfamily.

The protein localises to the cytoplasm. It catalyses the reaction phosphoenolpyruvate + UDP-N-acetyl-alpha-D-glucosamine = UDP-N-acetyl-3-O-(1-carboxyvinyl)-alpha-D-glucosamine + phosphate. The protein operates within cell wall biogenesis; peptidoglycan biosynthesis. Its function is as follows. Cell wall formation. Adds enolpyruvyl to UDP-N-acetylglucosamine. In Oceanobacillus iheyensis (strain DSM 14371 / CIP 107618 / JCM 11309 / KCTC 3954 / HTE831), this protein is UDP-N-acetylglucosamine 1-carboxyvinyltransferase 2.